The primary structure comprises 244 residues: Thiol S-methyltransferase TMT1B (244 aa).

A signal peptide spans methionine 1–alanine 23.

It belongs to the methyltransferase superfamily. In terms of tissue distribution, highly expressed in liver and kidney. No expression in testis, heart, lung, brain, spleen or cultured fibroblasts.

It localises to the endoplasmic reticulum membrane. It is found in the lipid droplet. The protein resides in the microsome. Its subcellular location is the cytoplasm. The protein localises to the cytosol. It carries out the reaction a thiol + S-adenosyl-L-methionine = a methyl thioether + S-adenosyl-L-homocysteine + H(+). Its function is as follows. Thiol S-methyltransferase that catalyzes the transfer of a methyl group from S-adenosyl-L-methionine to alkyl and phenolic thiol-containing acceptor substrates. Together with TMT1B accounts for most of S-thiol methylation activity in the endoplasmic reticulum of hepatocytes. Selectively methylates S-centered nucleophiles from metabolites such as hydrogen sulfide and dithiothreitol. The protein is Thiol S-methyltransferase TMT1B (Tmt1b) of Rattus norvegicus (Rat).